A 373-amino-acid chain; its full sequence is Type II secretion system protein L (373 aa).

The Cytoplasmic portion of the chain corresponds to 1–214; sequence MTAWRDTLGR…RRSDPMQRWN (214 aa). The chain crosses the membrane as a helical span at residues 215–233; the sequence is LLLAVAALVLLAVAGWLLL. Over 234 to 373 the chain is Periplasmic; sequence DNRRQAADDL…AKEAADAAQR (140 aa).

Belongs to the GSP L family. As to quaternary structure, type II secretion system is composed of four main components: the outer membrane complex, the inner membrane complex, the cytoplasmic secretion ATPase and the periplasm-spanning pseudopilus. Forms homodimers. Interacts with XpsM/GspM. Interacts with XpsE/GspE and XpsF/GspF.

The protein localises to the cell inner membrane. Its function is as follows. Inner membrane component of the type II secretion system required for the energy-dependent secretion of extracellular factors such as proteases and toxins from the periplasm. Plays a role in the complex assembly and recruits XpsM resulting in a stable complex in the inner membrane. Provides thus a link between the energy-providing XpsE protein in the cytoplasm and the rest of the T2SS machinery. In Xanthomonas campestris pv. campestris (strain ATCC 33913 / DSM 3586 / NCPPB 528 / LMG 568 / P 25), this protein is Type II secretion system protein L (pefL).